A 128-amino-acid chain; its full sequence is Azurin (128 aa).

Residues Ala-1–Ser-128 enclose the Plastocyanin-like domain. A disulfide bond links Cys-2 and Cys-25. Cu cation-binding residues include His-45, Cys-111, His-116, and Met-120.

As to quaternary structure, monomer. Interacts with the AAUA/AAUB heterotetramer complex. Requires Cu cation as cofactor.

It localises to the periplasm. Transfers electrons from cytochrome c551 to cytochrome oxidase. Transfers electrons from the tryptophan tryptophylquinone of the aromatic amine dehydrogenase heterotetramer. The polypeptide is Azurin (Alcaligenes faecalis).